We begin with the raw amino-acid sequence, 327 residues long: D-alanine--D-alanine ligase (327 aa).

The region spanning 113–312 (KRLWMTHDLS…YEDFVMQVVA (200 aa)) is the ATP-grasp domain. 139 to 194 (VADLGLPLIVKPAREGSSIGLSKVTDASQMREAFEKAAALDNDVIAETFIDGAELT) contributes to the ATP binding site. Residues aspartate 266, glutamate 279, and asparagine 281 each contribute to the Mg(2+) site.

It belongs to the D-alanine--D-alanine ligase family. The cofactor is Mg(2+). Requires Mn(2+) as cofactor.

It localises to the cytoplasm. The enzyme catalyses 2 D-alanine + ATP = D-alanyl-D-alanine + ADP + phosphate + H(+). Its pathway is cell wall biogenesis; peptidoglycan biosynthesis. In terms of biological role, cell wall formation. This is D-alanine--D-alanine ligase from Cupriavidus pinatubonensis (strain JMP 134 / LMG 1197) (Cupriavidus necator (strain JMP 134)).